The following is a 462-amino-acid chain: L-seryl-tRNA(Sec) selenium transferase (462 aa).

An N6-(pyridoxal phosphate)lysine modification is found at Lys293.

Belongs to the SelA family. The cofactor is pyridoxal 5'-phosphate.

The protein localises to the cytoplasm. The enzyme catalyses L-seryl-tRNA(Sec) + selenophosphate + H(+) = L-selenocysteinyl-tRNA(Sec) + phosphate. It participates in aminoacyl-tRNA biosynthesis; selenocysteinyl-tRNA(Sec) biosynthesis; selenocysteinyl-tRNA(Sec) from L-seryl-tRNA(Sec) (bacterial route): step 1/1. Functionally, converts seryl-tRNA(Sec) to selenocysteinyl-tRNA(Sec) required for selenoprotein biosynthesis. This Clostridium botulinum (strain ATCC 19397 / Type A) protein is L-seryl-tRNA(Sec) selenium transferase.